The primary structure comprises 367 residues: uncharacterized protein (367 aa).

Residues 4 to 234 (LTFEHVKKSY…PANLFVAGFI (231 aa)) form the ABC transporter domain. 36 to 43 (GPSGCGKS) is a binding site for ATP.

The protein belongs to the ABC transporter superfamily.

This is an uncharacterized protein from Bacillus subtilis (strain 168).